Consider the following 469-residue polypeptide: UDP-N-acetylmuramate--L-alanine ligase (469 aa).

ATP is bound at residue 122-128; the sequence is GTHGKTT.

The protein belongs to the MurCDEF family.

Its subcellular location is the cytoplasm. The catalysed reaction is UDP-N-acetyl-alpha-D-muramate + L-alanine + ATP = UDP-N-acetyl-alpha-D-muramoyl-L-alanine + ADP + phosphate + H(+). The protein operates within cell wall biogenesis; peptidoglycan biosynthesis. In terms of biological role, cell wall formation. The sequence is that of UDP-N-acetylmuramate--L-alanine ligase from Legionella pneumophila (strain Paris).